We begin with the raw amino-acid sequence, 83 residues long: Small ribosomal subunit protein eS21 (83 aa).

Belongs to the eukaryotic ribosomal protein eS21 family. As to quaternary structure, component of the 40S small ribosomal subunit.

It localises to the cytoplasm. Its subcellular location is the cytosol. The protein localises to the rough endoplasmic reticulum. The chain is Small ribosomal subunit protein eS21 (RpS21) from Agriotes lineatus (Lined click beetle).